A 543-amino-acid polypeptide reads, in one-letter code: Probable protein kinase UbiB (543 aa).

A Protein kinase domain is found at 123–501; the sequence is DFDSQALASA…GSRQGRARYL (379 aa). Residues 129–137 and Lys152 contribute to the ATP site; that span reads LASASIAQV. Residue Asp287 is the Proton acceptor of the active site. A helical membrane pass occupies residues 517 to 537; the sequence is MVNIALWPIGLYVAGGVIWLA.

The protein belongs to the ABC1 family. UbiB subfamily.

The protein localises to the cell inner membrane. The protein operates within cofactor biosynthesis; ubiquinone biosynthesis [regulation]. In terms of biological role, is probably a protein kinase regulator of UbiI activity which is involved in aerobic coenzyme Q (ubiquinone) biosynthesis. The sequence is that of Probable protein kinase UbiB from Edwardsiella ictaluri (strain 93-146).